The following is a 525-amino-acid chain: GMP synthase [glutamine-hydrolyzing] (525 aa).

Positions 9–207 constitute a Glutamine amidotransferase type-1 domain; that stretch reads RILILDFGSQ…VLEICGCAAL (199 aa). Cys86 serves as the catalytic Nucleophile. Residues His181 and Glu183 contribute to the active site. One can recognise a GMPS ATP-PPase domain in the interval 208-400; the sequence is WTPATIIEDA…LGLPYDMLYR (193 aa). 235–241 contributes to the ATP binding site; it reads SGGVDSS.

Homodimer.

It catalyses the reaction XMP + L-glutamine + ATP + H2O = GMP + L-glutamate + AMP + diphosphate + 2 H(+). Its pathway is purine metabolism; GMP biosynthesis; GMP from XMP (L-Gln route): step 1/1. Its function is as follows. Catalyzes the synthesis of GMP from XMP. This is GMP synthase [glutamine-hydrolyzing] from Edwardsiella ictaluri (strain 93-146).